Here is a 587-residue protein sequence, read N- to C-terminus: MFS-type transporter opaD (587 aa).

9 consecutive transmembrane segments (helical) span residues 87–107 (VAIM…NTIL), 124–146 (MGWY…GKLL), 153–173 (WVYI…GVSP), 184–204 (ISGT…TIIV), 214–234 (GILS…GGAF), 242–262 (WCFY…LLLF), 284–304 (IIGL…LQWG), 315–335 (IIAL…VEYW), and 357–377 (LFTF…PIWF). The N-linked (GlcNAc...) asparagine glycan is linked to Asn382. Helical transmembrane passes span 393–413 (IPLI…VTTL), 414–434 (GYYI…AGLL), 447–467 (IGFQ…PLVV), 483–503 (LVTL…QSVF), and 554–574 (VYLV…PIRW).

This sequence belongs to the major facilitator superfamily. TCR/Tet family.

Its subcellular location is the membrane. Its function is as follows. MFS-type transporter; part of the gene cluster that mediates the biosynthesis of oxepinamides, derivatives of anthranilyl-containing tripeptides that share an oxepin ring and a fused pyrimidinone moiety. In Aspergillus ustus, this protein is MFS-type transporter opaD.